The following is a 273-amino-acid chain: Alcohol dehydrogenase-related 31 kDa protein (273 aa).

An NAD(+)-binding site is contributed by 11–34; it reads YVADCGGIALETCKVLMTKNIAKL. Residue Ser139 coordinates substrate. Tyr152 serves as the catalytic Proton acceptor.

It belongs to the short-chain dehydrogenases/reductases (SDR) family.

The polypeptide is Alcohol dehydrogenase-related 31 kDa protein (Adhr) (Drosophila immigrans (Fruit fly)).